The chain runs to 913 residues: Anoctamin-5 (913 aa).

Residues methionine 1 to lysine 299 are Cytoplasmic-facing. A helical membrane pass occupies residues isoleucine 300–valine 320. Topologically, residues glycine 321 to asparagine 380 are extracellular. 3 N-linked (GlcNAc...) asparagine glycosylation sites follow: asparagine 335, asparagine 366, and asparagine 380. A helical membrane pass occupies residues glutamate 381 to tryptophan 401. Residues lysine 402–serine 462 are Cytoplasmic-facing. A helical transmembrane segment spans residues glycine 463–tyrosine 483. Residues arginine 484 to glutamine 511 lie on the Extracellular side of the membrane. Residues isoleucine 512 to phenylalanine 532 traverse the membrane as a helical segment. Over tyrosine 533–threonine 557 the chain is Cytoplasmic. A helical transmembrane segment spans residues leucine 558 to phenylalanine 578. Topologically, residues lysine 579 to glutamine 679 are extracellular. A helical membrane pass occupies residues phenylalanine 680–asparagine 700. Residues asparagine 701–aspartate 732 are Cytoplasmic-facing. Residues isoleucine 733–serine 753 traverse the membrane as a helical segment. The Extracellular portion of the chain corresponds to aspartate 754–threonine 834. N-linked (GlcNAc...) asparagine glycans are attached at residues asparagine 768, asparagine 778, and asparagine 791. A helical membrane pass occupies residues phenylalanine 835–proline 855. Topologically, residues aspartate 856–leucine 913 are cytoplasmic.

The protein belongs to the anoctamin family. Highly expressed in brain, heart, kidney, lung, and skeletal muscle. Weakly expressed in bone marrow, fetal liver, placenta, spleen, thymus, osteoblasts and periodontal ligament cells.

It localises to the endoplasmic reticulum membrane. The protein localises to the cell membrane. In terms of biological role, plays a role in plasma membrane repair in a process involving annexins. Does not exhibit calcium-activated chloride channel (CaCC) activity. In Homo sapiens (Human), this protein is Anoctamin-5 (ANO5).